Consider the following 169-residue polypeptide: Peptide deformylase (169 aa).

Fe cation is bound by residues Cys-91 and His-133. Glu-134 is an active-site residue. Position 137 (His-137) interacts with Fe cation.

It belongs to the polypeptide deformylase family. Requires Fe(2+) as cofactor.

The enzyme catalyses N-terminal N-formyl-L-methionyl-[peptide] + H2O = N-terminal L-methionyl-[peptide] + formate. In terms of biological role, removes the formyl group from the N-terminal Met of newly synthesized proteins. Requires at least a dipeptide for an efficient rate of reaction. N-terminal L-methionine is a prerequisite for activity but the enzyme has broad specificity at other positions. This is Peptide deformylase from Hydrogenovibrio crunogenus (strain DSM 25203 / XCL-2) (Thiomicrospira crunogena).